The chain runs to 262 residues: Flap endonuclease Xni (262 aa).

Aspartate 105 contacts Mg(2+). A 5'-3' exonuclease domain is found at 164–251; sequence SQFLDLMALA…NINLKDFRAN (88 aa). K(+) contacts are provided by leucine 172, alanine 173, proline 181, isoleucine 183, and isoleucine 186. The tract at residues 185 to 190 is interaction with DNA; the sequence is GIGPKS.

Belongs to the Xni family. Requires Mg(2+) as cofactor. It depends on K(+) as a cofactor.

In terms of biological role, has flap endonuclease activity. During DNA replication, flap endonucleases cleave the 5'-overhanging flap structure that is generated by displacement synthesis when DNA polymerase encounters the 5'-end of a downstream Okazaki fragment. This is Flap endonuclease Xni from Shewanella putrefaciens (strain CN-32 / ATCC BAA-453).